The following is a 941-amino-acid chain: Probable lipoxygenase 8, chloroplastic (941 aa).

2 disordered regions span residues 1-22 (MLRP…SSSS) and 45-68 (LIAG…VVRC). Residues 1–67 (MLRPQLNPSS…QQGRQRVVVR (67 aa)) constitute a chloroplast transit peptide. Residues 100-236 (AVATIKVTVE…SIDEGTPGKR (137 aa)) enclose the PLAT domain. The Lipoxygenase domain maps to 242 to 941 (AYLPGQTPAG…GMGIPNSTSI (700 aa)). 2 disordered regions span residues 255-274 (YREE…READ) and 288-331 (NPDS…RKGN). The span at 319–331 (SKKDPKSETRKGN) shows a compositional bias: basic and acidic residues. Fe cation-binding residues include histidine 598, histidine 603, histidine 790, asparagine 794, and isoleucine 941.

Belongs to the lipoxygenase family. Fe cation is required as a cofactor.

The protein resides in the plastid. It localises to the chloroplast. The catalysed reaction is (9Z,12Z)-octadecadienoate + O2 = (13S)-hydroperoxy-(9Z,11E)-octadecadienoate. The enzyme catalyses (9Z,12Z,15Z)-octadecatrienoate + O2 = (13S)-hydroperoxy-(9Z,11E,15Z)-octadecatrienoate. It participates in lipid metabolism; oxylipin biosynthesis. Functionally, plant lipoxygenase may be involved in a number of diverse aspects of plant physiology including growth and development, pest resistance, and senescence or responses to wounding. It catalyzes the hydroperoxidation of lipids containing a cis,cis-1,4-pentadiene structure. The polypeptide is Probable lipoxygenase 8, chloroplastic (CM-LOX2) (Oryza sativa subsp. japonica (Rice)).